We begin with the raw amino-acid sequence, 142 residues long: ATP synthase epsilon chain (142 aa).

Belongs to the ATPase epsilon chain family. As to quaternary structure, F-type ATPases have 2 components, CF(1) - the catalytic core - and CF(0) - the membrane proton channel. CF(1) has five subunits: alpha(3), beta(3), gamma(1), delta(1), epsilon(1). CF(0) has three main subunits: a, b and c.

Its subcellular location is the cell inner membrane. Produces ATP from ADP in the presence of a proton gradient across the membrane. The sequence is that of ATP synthase epsilon chain from Shewanella loihica (strain ATCC BAA-1088 / PV-4).